The primary structure comprises 297 residues: B-lymphocyte antigen CD20 (297 aa).

Over 1 to 51 (MTTPRNSMSGTLPVDPMKSPTAMYPVQKIIPKRMPSVVGPTQNFFMRESKT) the chain is Cytoplasmic. At Ser36 the chain carries Phosphoserine. A helical transmembrane segment spans residues 52-72 (LGAVQIMNGLFHIALGSLLMI). Topologically, residues 73-75 (HTD) are extracellular. Residues 76–96 (VCAPICITMWYPLWGGIMFII) traverse the membrane as a helical segment. The Cytoplasmic segment spans residues 97–122 (SGSLLAAADKNPRKSLVKGKMIMNSL). The chain crosses the membrane as a helical span at residues 123 to 143 (SLFAAISGIIFLIMDIFNITI). The Extracellular portion of the chain corresponds to 144-188 (SHFFKMENLNLIKAPMPYVDIHNCDPANPSEKNSLSIQYCGSIRS). Residues 189 to 209 (VFLGVFAVMLIFAFFQKLVTA) form a helical membrane-spanning segment. The Cytoplasmic portion of the chain corresponds to 210-297 (GIVENEWKKL…SSPIENDSIP (88 aa)). Cys220 carries the S-palmitoyl cysteine lipid modification. Ser225 carries the post-translational modification Phosphoserine. A disordered region spans residues 274–297 (ELEINFAEPPQEQESSPIENDSIP). Over residues 281–290 (EPPQEQESSP) the composition is skewed to low complexity.

It belongs to the MS4A family. As to quaternary structure, forms homotetramers. Interacts with the heavy and light chains of cell surface IgM, the antigen-binding components of the BCR. Phosphorylated. Might be functionally regulated by protein kinase(s). In terms of tissue distribution, expressed in PBMCs and lymph node from healthy dogs, in B-cells of canine lymphoma, but not in T-cell lymphoma cells and non-T and non-B-cell lymphoma cells.

Its subcellular location is the cell membrane. Its function is as follows. B-lymphocyte-specific membrane protein that plays a role in the regulation of cellular calcium influx necessary for the development, differentiation, and activation of B-lymphocytes. Functions as a store-operated calcium (SOC) channel component promoting calcium influx after activation by the B-cell receptor/BCR. This is B-lymphocyte antigen CD20 (MS4A1) from Canis lupus familiaris (Dog).